Consider the following 546-residue polypeptide: G1/S-specific cyclin CLN1 (546 aa).

Residues Ser-224–Met-265 form a disordered region.

It belongs to the cyclin family.

Functionally, essential for the control of the cell cycle at the G1/S (start) transition. Interacts with the CDC28 protein kinase to form MPF. In Saccharomyces cerevisiae (strain ATCC 204508 / S288c) (Baker's yeast), this protein is G1/S-specific cyclin CLN1 (CLN1).